The following is a 245-amino-acid chain: Ribonuclease PH (245 aa).

Residues Arg86 and 124-126 contribute to the phosphate site; that span reads GTR.

The protein belongs to the RNase PH family. In terms of assembly, homohexameric ring arranged as a trimer of dimers.

It carries out the reaction tRNA(n+1) + phosphate = tRNA(n) + a ribonucleoside 5'-diphosphate. Phosphorolytic 3'-5' exoribonuclease that plays an important role in tRNA 3'-end maturation. Removes nucleotide residues following the 3'-CCA terminus of tRNAs; can also add nucleotides to the ends of RNA molecules by using nucleoside diphosphates as substrates, but this may not be physiologically important. Probably plays a role in initiation of 16S rRNA degradation (leading to ribosome degradation) during starvation. This Bacillus mycoides (strain KBAB4) (Bacillus weihenstephanensis) protein is Ribonuclease PH.